The chain runs to 542 residues: Probable folate-biopterin transporter 8, chloroplastic (542 aa).

The transit peptide at 1 to 78 (MERIMINPLL…GVSEFEETAR (78 aa)) directs the protein to the chloroplast. The interval 24–45 (LSSIHRQQQQQERQSNNNTLFM) is disordered. 12 consecutive transmembrane segments (helical) span residues 103–123 (FPWL…PSTL), 132–152 (LPMV…IGSG), 155–175 (VPYI…MGIF), 181–201 (VLPS…ITEV), 223–243 (ALMA…YLLL), 246–266 (PPKI…VVSL), 308–328 (LIWA…VFCY), 338–358 (SVIG…TVVY), 369–389 (PLIH…YILV), 404–424 (VLCF…PFAV), 446–466 (LCLS…LIGI), and 477–497 (GILI…LVPM). The interval 506–542 (GKRGISKRSRRNRRVGRVVDKESVTYRRERESEEAQR) is disordered. The segment covering 509–521 (GISKRSRRNRRVG) has biased composition (basic residues). Basic and acidic residues predominate over residues 522 to 542 (RVVDKESVTYRRERESEEAQR).

It belongs to the major facilitator superfamily. Folate-biopterin transporter (TC 2.A.71) family.

The protein localises to the plastid. The protein resides in the chloroplast membrane. In terms of biological role, could mediate folate transport. The sequence is that of Probable folate-biopterin transporter 8, chloroplastic from Arabidopsis thaliana (Mouse-ear cress).